Consider the following 223-residue polypeptide: Probable transaldolase (223 aa).

Lysine 91 acts as the Schiff-base intermediate with substrate in catalysis.

It belongs to the transaldolase family. Type 3B subfamily.

It is found in the cytoplasm. It carries out the reaction D-sedoheptulose 7-phosphate + D-glyceraldehyde 3-phosphate = D-erythrose 4-phosphate + beta-D-fructose 6-phosphate. The protein operates within carbohydrate degradation; pentose phosphate pathway; D-glyceraldehyde 3-phosphate and beta-D-fructose 6-phosphate from D-ribose 5-phosphate and D-xylulose 5-phosphate (non-oxidative stage): step 2/3. In terms of biological role, transaldolase is important for the balance of metabolites in the pentose-phosphate pathway. The protein is Probable transaldolase of Prosthecochloris aestuarii (strain DSM 271 / SK 413).